A 203-amino-acid chain; its full sequence is Histidine biosynthesis bifunctional protein HisIE (203 aa).

Positions 1-114 (MLTEQQRREL…FGDTAHQWLF (114 aa)) are phosphoribosyl-AMP cyclohydrolase. The phosphoribosyl-ATP pyrophosphohydrolase stretch occupies residues 115 to 203 (LYQLEQLLAE…VIENLRKRHQ (89 aa)).

The protein in the N-terminal section; belongs to the PRA-CH family. This sequence in the C-terminal section; belongs to the PRA-PH family.

It localises to the cytoplasm. It catalyses the reaction 1-(5-phospho-beta-D-ribosyl)-ATP + H2O = 1-(5-phospho-beta-D-ribosyl)-5'-AMP + diphosphate + H(+). The enzyme catalyses 1-(5-phospho-beta-D-ribosyl)-5'-AMP + H2O = 1-(5-phospho-beta-D-ribosyl)-5-[(5-phospho-beta-D-ribosylamino)methylideneamino]imidazole-4-carboxamide. The protein operates within amino-acid biosynthesis; L-histidine biosynthesis; L-histidine from 5-phospho-alpha-D-ribose 1-diphosphate: step 2/9. It participates in amino-acid biosynthesis; L-histidine biosynthesis; L-histidine from 5-phospho-alpha-D-ribose 1-diphosphate: step 3/9. The sequence is that of Histidine biosynthesis bifunctional protein HisIE from Escherichia coli O6:H1 (strain CFT073 / ATCC 700928 / UPEC).